A 105-amino-acid chain; its full sequence is Large ribosomal subunit protein bL21 (105 aa).

Belongs to the bacterial ribosomal protein bL21 family. Part of the 50S ribosomal subunit. Contacts protein L20.

This protein binds to 23S rRNA in the presence of protein L20. This is Large ribosomal subunit protein bL21 from Thermotoga maritima (strain ATCC 43589 / DSM 3109 / JCM 10099 / NBRC 100826 / MSB8).